Consider the following 123-residue polypeptide: UPF0738 protein BALH_1059 (123 aa).

It belongs to the UPF0738 family.

The polypeptide is UPF0738 protein BALH_1059 (Bacillus thuringiensis (strain Al Hakam)).